The chain runs to 208 residues: Small ribosomal subunit protein eS8 (208 aa).

Residues 1–33 (MGISRDHWHKRRATGGKRKPIRKKRKFELGRPA) are disordered. Basic residues predominate over residues 7–26 (HWHKRRATGGKRKPIRKKRK).

It belongs to the eukaryotic ribosomal protein eS8 family.

The chain is Small ribosomal subunit protein eS8 (RpS8) from Apis mellifera (Honeybee).